The following is a 66-amino-acid chain: Large ribosomal subunit protein bL31 (66 aa).

Residues Cys-16, Cys-18, Cys-36, and Cys-39 each coordinate Zn(2+).

It belongs to the bacterial ribosomal protein bL31 family. Type A subfamily. In terms of assembly, part of the 50S ribosomal subunit. Zn(2+) serves as cofactor.

Functionally, binds the 23S rRNA. The sequence is that of Large ribosomal subunit protein bL31 from Nautilia profundicola (strain ATCC BAA-1463 / DSM 18972 / AmH).